The sequence spans 347 residues: Neutral protease 2 homolog MGG_10927 (347 aa).

The N-terminal stretch at 1–19 is a signal peptide; it reads MKYSVGITALLATLAQGAA. A propeptide spanning residues 20–176 is cleaved from the precursor; the sequence is VMSKRDIPLD…RSYLAKRTMV (157 aa). 2 disulfides stabilise this stretch: Cys180/Cys250 and Cys257/Cys275. His299 provides a ligand contact to Zn(2+). Glu300 is a catalytic residue. His303 is a Zn(2+) binding site.

This sequence belongs to the peptidase M35 family. The cofactor is Zn(2+).

The protein localises to the secreted. The enzyme catalyses Preferential cleavage of bonds with hydrophobic residues in P1'. Also 3-Asn-|-Gln-4 and 8-Gly-|-Ser-9 bonds in insulin B chain.. Secreted metalloproteinase that allows assimilation of proteinaceous substrates. Shows high activities on basic nuclear substrates such as histone and protamine. The sequence is that of Neutral protease 2 homolog MGG_10927 from Pyricularia oryzae (strain 70-15 / ATCC MYA-4617 / FGSC 8958) (Rice blast fungus).